Here is a 2167-residue protein sequence, read N- to C-terminus: Beige protein homolog 1 (2167 aa).

One can recognise a BEACH-type PH domain in the interval lysine 1368 to asparagine 1499. The BEACH domain occupies serine 1545 to lysine 1839. Residue lysine 1667 forms a Glycyl lysine isopeptide (Lys-Gly) (interchain with G-Cter in ubiquitin) linkage. 5 WD repeats span residues threonine 1927–serine 1965, glycine 1976–glutamine 2015, threonine 2017–lysine 2054, lysine 2072–tryptophan 2111, and serine 2129–tyrosine 2167.

It localises to the cytoplasm. It is found in the membrane. In terms of biological role, may be involved in protein sorting and cell wall formation. This chain is Beige protein homolog 1 (BPH1), found in Saccharomyces cerevisiae (strain ATCC 204508 / S288c) (Baker's yeast).